We begin with the raw amino-acid sequence, 252 residues long: Flap endonuclease Xni (252 aa).

Asp-103 contacts Mg(2+). One can recognise a 5'-3' exonuclease domain in the interval 159-248; that stretch reads VLPEQLPDYW…LKGNLQQLRL (90 aa). Residues Leu-170, Ala-171, Pro-179, Ile-181, and Ile-184 each coordinate K(+). Positions 183–188 are interaction with DNA; that stretch reads GIGPKT.

The protein belongs to the Xni family. Mg(2+) is required as a cofactor. K(+) serves as cofactor.

In terms of biological role, has flap endonuclease activity. During DNA replication, flap endonucleases cleave the 5'-overhanging flap structure that is generated by displacement synthesis when DNA polymerase encounters the 5'-end of a downstream Okazaki fragment. The sequence is that of Flap endonuclease Xni from Photorhabdus laumondii subsp. laumondii (strain DSM 15139 / CIP 105565 / TT01) (Photorhabdus luminescens subsp. laumondii).